A 241-amino-acid chain; its full sequence is Platelet-derived growth factor subunit B (241 aa).

Positions 1–20 are cleaved as a signal peptide; the sequence is MNRCWALFLSLCCYLRLVSA. Residues 21–81 constitute a propeptide, removed in mature form; it reads EGDPIPEELY…ELESLARGRR (61 aa). Asn-63 carries N-linked (GlcNAc...) asparagine glycosylation. Cystine bridges form between Cys-97–Cys-141, Cys-130–Cys-178, and Cys-134–Cys-180. A propeptide spans 191-241 (removed in mature form); sequence RSPGGSQEQRAKTPQTRVTIRTVRVRRPPKGKHRKFKHTHDKTALKETLGA. Basic residues predominate over residues 216 to 230; sequence RRPPKGKHRKFKHTH. Positions 216-241 are disordered; that stretch reads RRPPKGKHRKFKHTHDKTALKETLGA.

Belongs to the PDGF/VEGF growth factor family. Antiparallel homodimer; disulfide-linked. Antiparallel heterodimer with PDGFA; disulfide-linked. The PDGFB homodimer interacts with PDGFRA and PDGFRB homodimers, and with heterodimers formed by PDGFRA and PDGFRB. The heterodimer composed of PDGFA and PDGFB interacts with PDGFRB homodimers, and with heterodimers formed by PDGFRA and PDGFRB. Interacts with XLKD1. Interacts with LRP1. Interacts with SORL1 (via the N-terminal ectodomain). Interacts with CD82; this interaction inhibits PDGFB-mediated signaling pathway. In terms of tissue distribution, expressed at high levels in the heart, brain (sustantia nigra), placenta and fetal kidney. Expressed at moderate levels in the brain (hippocampus), skeletal muscle, kidney and lung.

Its subcellular location is the secreted. In terms of biological role, growth factor that plays an essential role in the regulation of embryonic development, cell proliferation, cell migration, survival and chemotaxis. Potent mitogen for cells of mesenchymal origin. Required for normal proliferation and recruitment of pericytes and vascular smooth muscle cells in the central nervous system, skin, lung, heart and placenta. Required for normal blood vessel development, and for normal development of kidney glomeruli. Plays an important role in wound healing. Signaling is modulated by the formation of heterodimers with PDGFA. The chain is Platelet-derived growth factor subunit B (PDGFB) from Homo sapiens (Human).